We begin with the raw amino-acid sequence, 152 residues long: Small ribosomal subunit protein bS6 (152 aa).

Residues 96-152 form a disordered region; that stretch reads HEEGPSAMLQKRDRDDRGPREGGDRGPRREFGDRPPRRDGDFQRGPRPDRAPREDRA.

This sequence belongs to the bacterial ribosomal protein bS6 family.

In terms of biological role, binds together with bS18 to 16S ribosomal RNA. The polypeptide is Small ribosomal subunit protein bS6 (Rhizobium etli (strain ATCC 51251 / DSM 11541 / JCM 21823 / NBRC 15573 / CFN 42)).